We begin with the raw amino-acid sequence, 274 residues long: MAIKIYRPTSPGRRHHSVSSFEEITKSRPERALLVSVKNDSGRNNQGRVTVRHRGGGSKTQIRVIDFKRNKLDVPGRVAAIEYDPNRTARIALVFYTDGEKRYILAPSDLKVGDVIMAGENAEPKSGNALPLSSIPTGTFIHNIEIIKGKGGIMVRSAGAAAQLMAKEDDYALVRLPSGEMRKVRSDCSATVGQIGNIEHGTLEIGKAGRNRHLGWRPTVRGSAMSPNNHPHGGGECRCPIGMTGPKTPWGKPALGYRTRKAKYSDKLIVKRRG.

The disordered stretch occupies residues 1-23; sequence MAIKIYRPTSPGRRHHSVSSFEE.

It belongs to the universal ribosomal protein uL2 family. Part of the 50S ribosomal subunit. Forms a bridge to the 30S subunit in the 70S ribosome.

One of the primary rRNA binding proteins. Required for association of the 30S and 50S subunits to form the 70S ribosome, for tRNA binding and peptide bond formation. It has been suggested to have peptidyltransferase activity; this is somewhat controversial. Makes several contacts with the 16S rRNA in the 70S ribosome. In Dehalococcoides mccartyi (strain ATCC BAA-2100 / JCM 16839 / KCTC 5957 / BAV1), this protein is Large ribosomal subunit protein uL2.